We begin with the raw amino-acid sequence, 360 residues long: MYGLLRRLLFLLPPERVHKLVFAVLRGATAATPVRRMLTRWLGPTDPVLASTVFGVRFPGPLGLAAGFDKDGTGLDTWAAMGFGYAEVGTVTAHPQPGNPAPRLFRLPEDRALLNRMGFNNHGAGALAIRLARHHPEVPVGVNIGKTKTTPADQAVDDYRASARLVGPLASYLVVNVSSPNTPGLRDLQAVESLRPILAAVLAETSTPVLVKIAPDLSDSDVDEVADLAVELGLAGIVATNTTVSRDGLLTPGVGQLGAGGISGPPVAERSLEVLCRLYQRVGDRLTLISVGGIETAEDAWDRITAGASLLQGYTGFIYGGGLWSKHIHDGIARRLHQGGFGSLHEAVGSNAAERGRPPS.

Residues 66-70 and Thr90 contribute to the FMN site; that span reads AGFDK. Residue Lys70 coordinates substrate. Residue 115–119 coordinates substrate; sequence NRMGF. Positions 143 and 176 each coordinate FMN. Asn176 is a substrate binding site. Residue Ser179 is the Nucleophile of the active site. Asn181 is a substrate binding site. FMN contacts are provided by Lys212 and Thr240. 241 to 242 provides a ligand contact to substrate; sequence NT. Residues Gly264, Gly293, and 314 to 315 each bind FMN; that span reads YT.

The protein belongs to the dihydroorotate dehydrogenase family. Type 2 subfamily. As to quaternary structure, monomer. Requires FMN as cofactor.

It is found in the cell membrane. The enzyme catalyses (S)-dihydroorotate + a quinone = orotate + a quinol. Its pathway is pyrimidine metabolism; UMP biosynthesis via de novo pathway; orotate from (S)-dihydroorotate (quinone route): step 1/1. In terms of biological role, catalyzes the conversion of dihydroorotate to orotate with quinone as electron acceptor. This is Dihydroorotate dehydrogenase (quinone) from Mycobacterium marinum (strain ATCC BAA-535 / M).